The sequence spans 161 residues: Phosphopantetheine adenylyltransferase (161 aa).

Ser11 lines the substrate pocket. Residues 11–12 (SF) and His19 contribute to the ATP site. Residues Lys43, Leu75, and Arg89 each coordinate substrate. ATP is bound by residues 90–92 (GLR), Glu100, and 125–131 (YSFISSS).

This sequence belongs to the bacterial CoaD family. In terms of assembly, homohexamer. Mg(2+) serves as cofactor.

Its subcellular location is the cytoplasm. It catalyses the reaction (R)-4'-phosphopantetheine + ATP + H(+) = 3'-dephospho-CoA + diphosphate. It functions in the pathway cofactor biosynthesis; coenzyme A biosynthesis; CoA from (R)-pantothenate: step 4/5. Reversibly transfers an adenylyl group from ATP to 4'-phosphopantetheine, yielding dephospho-CoA (dPCoA) and pyrophosphate. This Staphylococcus haemolyticus (strain JCSC1435) protein is Phosphopantetheine adenylyltransferase.